The chain runs to 1826 residues: Transcription initiation factor TFIID subunit 1-like (1826 aa).

3 disordered regions span residues 118-141, 532-555, and 1252-1276; these read DESQRHQQTMGSLQPLYHSDYDED, IPDEKEEATSNSPSKESKKESSLK, and RLKRNQEKEKLKGPPEKKPKKMKER. The span at 1252–1268 shows a compositional bias: basic and acidic residues; sequence RLKRNQEKEKLKGPPEK. The Nuclear localization signal signature appears at 1370–1377; it reads PPKKKRRV. 2 Bromo domains span residues 1395 to 1503 and 1517 to 1626; these read RRRT…LKEK and LLDD…ITEY. Residues 1648–1826 are disordered; that stretch reads AELESLDPMT…SGEHKDGHGK (179 aa). The segment covering 1660-1700 has biased composition (polar residues); sequence PYTSQPPDMYDTNTSLSTSRDASVFQDESNLSVLDISTATP. 3 stretches are compositionally biased toward acidic residues: residues 1714-1729, 1740-1750, and 1768-1783; these read EDSDVDVEGYDDEEED, GDGDLADEEEG, and EGEDDEEDAGSDEEGD. Residues 1787-1797 show a composition bias toward polar residues; it reads SAIQLSESGSD. The span at 1817–1826 shows a compositional bias: basic and acidic residues; it reads SGEHKDGHGK.

Belongs to the TAF1 family. In terms of assembly, can bind directly to TATA-box binding protein (TBP). Interacts (via bromo domains) with acetylated lysine residues on the N-terminus of histone H1.4, H2A, H2B, H3 and H4 (in vitro). As to expression, testis specific, expressed apparently in germ cells.

Its subcellular location is the nucleus. May act as a functional substitute for TAF1/TAFII250 during male meiosis, when sex chromosomes are transcriptionally silenced. The chain is Transcription initiation factor TFIID subunit 1-like (TAF1L) from Homo sapiens (Human).